The following is an 83-amino-acid chain: RNA-binding protein Hfq (83 aa).

A Sm domain is found at D10–V69.

The protein belongs to the Hfq family. In terms of assembly, homohexamer.

Its function is as follows. RNA chaperone that binds small regulatory RNA (sRNAs) and mRNAs to facilitate mRNA translational regulation in response to envelope stress, environmental stress and changes in metabolite concentrations. Also binds with high specificity to tRNAs. The polypeptide is RNA-binding protein Hfq (Delftia acidovorans (strain DSM 14801 / SPH-1)).